Reading from the N-terminus, the 213-residue chain is Thymidylate kinase (213 aa).

ATP is bound at residue 10 to 17 (GLEGAGKT).

This sequence belongs to the thymidylate kinase family.

The catalysed reaction is dTMP + ATP = dTDP + ADP. Functionally, phosphorylation of dTMP to form dTDP in both de novo and salvage pathways of dTTP synthesis. The sequence is that of Thymidylate kinase from Klebsiella pneumoniae subsp. pneumoniae (strain ATCC 700721 / MGH 78578).